The sequence spans 569 residues: Urease subunit alpha (569 aa).

Residues H136, H138, and K219 each contribute to the Ni(2+) site. Residue K219 is modified to N6-carboxylysine. H221 lines the substrate pocket. Positions 248 and 274 each coordinate Ni(2+). H322 (proton donor) is an active-site residue. D362 is a binding site for Ni(2+).

The protein belongs to the metallo-dependent hydrolases superfamily. Urease alpha subunit family. In terms of assembly, heterotrimer of UreA (gamma), UreB (beta) and UreC (alpha) subunits. Three heterotrimers associate to form the active enzyme. It depends on Ni cation as a cofactor. Carboxylation allows a single lysine to coordinate two nickel ions.

It is found in the cytoplasm. It catalyses the reaction urea + 2 H2O + H(+) = hydrogencarbonate + 2 NH4(+). It participates in nitrogen metabolism; urea degradation; CO(2) and NH(3) from urea (urease route): step 1/1. The chain is Urease subunit alpha from Microcystis aeruginosa (strain NIES-843 / IAM M-2473).